Reading from the N-terminus, the 392-residue chain is L-rhamnonate dehydratase (392 aa).

Substrate is bound by residues histidine 22 and arginine 48. Mg(2+)-binding residues include aspartate 214, glutamate 240, and glutamate 268. Catalysis depends on histidine 318, which acts as the Proton acceptor. Residue glutamate 338 participates in substrate binding.

The protein belongs to the mandelate racemase/muconate lactonizing enzyme family. RhamD subfamily. As to quaternary structure, homooctamer; tetramer of dimers. Mg(2+) is required as a cofactor.

The enzyme catalyses L-rhamnonate = 2-dehydro-3-deoxy-L-rhamnonate + H2O. Functionally, catalyzes the dehydration of L-rhamnonate to 2-keto-3-deoxy-L-rhamnonate (KDR). The polypeptide is L-rhamnonate dehydratase (Paraburkholderia phymatum (strain DSM 17167 / CIP 108236 / LMG 21445 / STM815) (Burkholderia phymatum)).